The sequence spans 190 residues: B3 domain-containing protein Os02g0764100 (190 aa).

The TF-B3 DNA-binding region spans 17–121 (FEKAVTPSDV…KLLFIDCKKN (105 aa)).

Its subcellular location is the nucleus. This chain is B3 domain-containing protein Os02g0764100, found in Oryza sativa subsp. japonica (Rice).